A 285-amino-acid chain; its full sequence is Nucleotide-binding protein Glov_2163 (285 aa).

8–15 (GMSGSGKS) contacts ATP. 59 to 62 (DIRG) serves as a coordination point for GTP.

The protein belongs to the RapZ-like family.

In terms of biological role, displays ATPase and GTPase activities. In Trichlorobacter lovleyi (strain ATCC BAA-1151 / DSM 17278 / SZ) (Geobacter lovleyi), this protein is Nucleotide-binding protein Glov_2163.